Here is a 245-residue protein sequence, read N- to C-terminus: MIPARRFLLSPFVGVTFIVVLVSLYFRSSFKSPQHQYQKRLFSAEELALYNGTDETLPILLGILGSVFDVTKGKFHYGSGGGYNHFAGRDASRAFVSGNFTGDGLTDSLQGLSSSEVKSIVDWRGFYSRTYTPVGKLVGRYYDSQGNPTKHLKGAEAKASRGAQLMEKQKTEEAKQSNCNSRWSQDEGGEVWCDVGVPRLVQRPLEIAITGSMSKRCACFEEDQLDQSGLEIYKDCEPLAKTCRV.

Residues 6–26 traverse the membrane as a helical segment; that stretch reads RFLLSPFVGVTFIVVLVSLYF. In terms of domain architecture, Cytochrome b5 heme-binding spans 39–138; sequence KRLFSAEELA…RTYTPVGKLV (100 aa). Residues 45–138 form a steroid-binding region; the sequence is EELALYNGTD…RTYTPVGKLV (94 aa).

This sequence belongs to the cytochrome b5 family. MAPR subfamily.

Its subcellular location is the membrane. The sequence is that of Membrane-associated progesterone-binding protein 4 from Arabidopsis thaliana (Mouse-ear cress).